A 127-amino-acid polypeptide reads, in one-letter code: Fluoride-specific ion channel FluC (127 aa).

Transmembrane regions (helical) follow at residues 7-27 (VYVA…VAWV), 38-58 (GTLA…VYVV), 70-90 (LIMV…LEAW), and 102-122 (LAYI…GIAL). Na(+) is bound by residues G77 and T80.

Belongs to the fluoride channel Fluc/FEX (TC 1.A.43) family.

It localises to the cell inner membrane. The catalysed reaction is fluoride(in) = fluoride(out). With respect to regulation, na(+) is not transported, but it plays an essential structural role and its presence is essential for fluoride channel function. Fluoride-specific ion channel. Important for reducing fluoride concentration in the cell, thus reducing its toxicity. The protein is Fluoride-specific ion channel FluC of Hahella chejuensis (strain KCTC 2396).